A 213-amino-acid chain; its full sequence is Imidazole glycerol phosphate synthase subunit HisH (213 aa).

The Glutamine amidotransferase type-1 domain occupies 1–212 (MLAILDYKAG…HRYCTEAADA (212 aa)). Cys-79 (nucleophile) is an active-site residue. Residues His-187 and Glu-189 contribute to the active site.

In terms of assembly, heterodimer of HisH and HisF.

It localises to the cytoplasm. The catalysed reaction is 5-[(5-phospho-1-deoxy-D-ribulos-1-ylimino)methylamino]-1-(5-phospho-beta-D-ribosyl)imidazole-4-carboxamide + L-glutamine = D-erythro-1-(imidazol-4-yl)glycerol 3-phosphate + 5-amino-1-(5-phospho-beta-D-ribosyl)imidazole-4-carboxamide + L-glutamate + H(+). The enzyme catalyses L-glutamine + H2O = L-glutamate + NH4(+). It functions in the pathway amino-acid biosynthesis; L-histidine biosynthesis; L-histidine from 5-phospho-alpha-D-ribose 1-diphosphate: step 5/9. Functionally, IGPS catalyzes the conversion of PRFAR and glutamine to IGP, AICAR and glutamate. The HisH subunit catalyzes the hydrolysis of glutamine to glutamate and ammonia as part of the synthesis of IGP and AICAR. The resulting ammonia molecule is channeled to the active site of HisF. The polypeptide is Imidazole glycerol phosphate synthase subunit HisH (Nitratidesulfovibrio vulgaris (strain ATCC 29579 / DSM 644 / CCUG 34227 / NCIMB 8303 / VKM B-1760 / Hildenborough) (Desulfovibrio vulgaris)).